The chain runs to 660 residues: Elongation factor 4 (660 aa).

The tr-type G domain maps to 55–241; sequence AQIRNFCIIA…EVVRQVPPPQ (187 aa). Residues 67–72 and 188–191 each bind GTP; these read DHGKST and NKID.

Belongs to the TRAFAC class translation factor GTPase superfamily. Classic translation factor GTPase family. LepA subfamily.

The protein localises to the cell membrane. The catalysed reaction is GTP + H2O = GDP + phosphate + H(+). Required for accurate and efficient protein synthesis under certain stress conditions. May act as a fidelity factor of the translation reaction, by catalyzing a one-codon backward translocation of tRNAs on improperly translocated ribosomes. Back-translocation proceeds from a post-translocation (POST) complex to a pre-translocation (PRE) complex, thus giving elongation factor G a second chance to translocate the tRNAs correctly. Binds to ribosomes in a GTP-dependent manner. The polypeptide is Elongation factor 4 (Mycolicibacterium paratuberculosis (strain ATCC BAA-968 / K-10) (Mycobacterium paratuberculosis)).